The chain runs to 347 residues: Melanoma-associated antigen B10 (347 aa).

A compositionally biased stretch (basic residues) spans 1 to 18 (MPRGQKSKLRAREKRRQA). Disordered regions lie at residues 1–20 (MPRG…QARG) and 56–92 (GASN…QMEE). Residues 67 to 78 (AQSTSTSATAAS) are compositionally biased toward low complexity. Residues 81–92 (RHPEGVNDQMEE) are compositionally biased toward basic and acidic residues. The MAGE domain maps to 111–310 (VDEKVIILVH…SEFSNWYTEA (200 aa)). The tract at residues 328-347 (VSATAGARSKVKSSKSSQLQ) is disordered.

In Homo sapiens (Human), this protein is Melanoma-associated antigen B10 (MAGEB10).